The chain runs to 153 residues: Pheromone-binding protein Gp-9 (153 aa).

The signal sequence occupies residues 1–19 (MKTFVLHIFIFALVAFASA). 3 disulfides stabilise this stretch: Cys-37–Cys-77, Cys-73–Cys-129, and Cys-118–Cys-138.

This sequence belongs to the PBP/GOBP family. As to quaternary structure, homodimer.

It is found in the secreted. In terms of biological role, colony queen number, a major feature of social organization, is associated with worker genotype for Gp-9. Colonies are headed by either a single reproductive queen (monogyne form) or multiple queens (polygyne form). Differences in worker Gp-9 genotypes between social forms may cause differences in workers' abilities to recognize queens and regulate their numbers. In Solenopsis pusillignis (Fire ant), this protein is Pheromone-binding protein Gp-9.